The sequence spans 289 residues: Protease HtpX homolog (289 aa).

2 helical membrane-spanning segments follow: residues 7 to 26 (TAALLAALSGLLIAISYWVI) and 31 to 48 (GLIIGIGLAAVTNLFSWY). Histidine 132 provides a ligand contact to Zn(2+). Glutamate 133 is an active-site residue. Residue histidine 136 participates in Zn(2+) binding. A run of 2 helical transmembrane segments spans residues 151-171 (VAGAISFLAQMVSYSLWFGGG) and 182-202 (LGVLLTVMLAPLAATIIQLAI). Glutamate 207 is a binding site for Zn(2+).

This sequence belongs to the peptidase M48B family. Zn(2+) serves as cofactor.

The protein resides in the cell inner membrane. This is Protease HtpX homolog from Nostoc punctiforme (strain ATCC 29133 / PCC 73102).